We begin with the raw amino-acid sequence, 201 residues long: MRLRNIPDALERIQNQNLLVKTPWNIDDSWIIEIGMGKGKMISQLAFDNPNKNFLGVEKYPSAAVKSIKYVKKYNLSNFFILISDAKDLLDQIKGKASTIWLTFPDPWPKNRHYKRRLTYKDFLKIYANLLVKDGILKLKTDNLKFFEFSIESLKENGWKITYQTNDLHNSLVNSSNIKTTYEEKWVNLNYKIHYLEAIFI.

Positions 33, 58, 85, and 106 each coordinate S-adenosyl-L-methionine. Residue Asp-106 is part of the active site. Substrate is bound by residues Lys-110, Asp-142, and 180-183 (TTYE).

It belongs to the class I-like SAM-binding methyltransferase superfamily. TrmB family.

The enzyme catalyses guanosine(46) in tRNA + S-adenosyl-L-methionine = N(7)-methylguanosine(46) in tRNA + S-adenosyl-L-homocysteine. It participates in tRNA modification; N(7)-methylguanine-tRNA biosynthesis. Catalyzes the formation of N(7)-methylguanine at position 46 (m7G46) in tRNA. The protein is tRNA (guanine-N(7)-)-methyltransferase of Mesomycoplasma hyopneumoniae (strain 232) (Mycoplasma hyopneumoniae).